The following is a 725-amino-acid chain: D-(-)-3-hydroxybutyrate oligomer hydrolase (725 aa).

The first 22 residues, 1–22 (MNTTRDANRLRQRASLSGLALA), serve as a signal peptide directing secretion. Serine 322 functions as the Charge relay system in the catalytic mechanism.

The protein belongs to the D-(-)-3-hydroxybutyrate oligomer hydrolase family.

It is found in the secreted. It carries out the reaction (3R)-hydroxybutanoate dimer + H2O = 2 (R)-3-hydroxybutanoate + H(+). It participates in lipid metabolism; butanoate metabolism. Participates in the degradation of poly-3-hydroxybutyrate (PHB). It works downstream of poly(3-hydroxybutyrate) depolymerase, hydrolyzing D(-)-3-hydroxybutyrate oligomers of various length (3HB-oligomers) into 3HB-monomers. This Ralstonia nicotianae (strain ATCC BAA-1114 / GMI1000) (Ralstonia solanacearum) protein is D-(-)-3-hydroxybutyrate oligomer hydrolase.